The chain runs to 417 residues: Exodeoxyribonuclease 7 large subunit (417 aa).

The protein belongs to the XseA family. Heterooligomer composed of large and small subunits.

The protein localises to the cytoplasm. The enzyme catalyses Exonucleolytic cleavage in either 5'- to 3'- or 3'- to 5'-direction to yield nucleoside 5'-phosphates.. Functionally, bidirectionally degrades single-stranded DNA into large acid-insoluble oligonucleotides, which are then degraded further into small acid-soluble oligonucleotides. This chain is Exodeoxyribonuclease 7 large subunit, found in Corynebacterium glutamicum (strain ATCC 13032 / DSM 20300 / JCM 1318 / BCRC 11384 / CCUG 27702 / LMG 3730 / NBRC 12168 / NCIMB 10025 / NRRL B-2784 / 534).